We begin with the raw amino-acid sequence, 87 residues long: Defensin-like protein 100 (87 aa).

Positions Met1–Gly29 are cleaved as a signal peptide. Intrachain disulfides connect Cys31-Cys79, Cys38-Cys64, Cys44-Cys76, and Cys48-Cys78.

This sequence belongs to the DEFL family.

The protein resides in the secreted. The polypeptide is Defensin-like protein 100 (Arabidopsis thaliana (Mouse-ear cress)).